A 120-amino-acid polypeptide reads, in one-letter code: Large ribosomal subunit protein uL18 (120 aa).

It belongs to the universal ribosomal protein uL18 family. In terms of assembly, part of the 50S ribosomal subunit; part of the 5S rRNA/L5/L18/L25 subcomplex. Contacts the 5S and 23S rRNAs.

Functionally, this is one of the proteins that bind and probably mediate the attachment of the 5S RNA into the large ribosomal subunit, where it forms part of the central protuberance. This chain is Large ribosomal subunit protein uL18, found in Maricaulis maris (strain MCS10) (Caulobacter maris).